The primary structure comprises 571 residues: uncharacterized protein (571 aa).

The interval 1-25 (MAPSVATSLKAEILPSPRTSSPSSN) is disordered. Residues 135–389 (FSVFPAPILD…RGLHKNAFAT (255 aa)) enclose the FAD-binding FR-type domain. Residues 447-479 (NPLQKSSDDDASSTVSQQTETEMDSFEVKKDGT) form a disordered region.

This sequence belongs to the flavoprotein pyridine nucleotide cytochrome reductase family. The cofactor is FAD.

This is an uncharacterized protein from Schizosaccharomyces pombe (strain 972 / ATCC 24843) (Fission yeast).